Here is a 314-residue protein sequence, read N- to C-terminus: Ribosomal RNA small subunit methyltransferase H (314 aa).

S-adenosyl-L-methionine-binding positions include 36-38, Asp-56, Phe-83, Asp-104, and Gln-111; that span reads GGH.

The protein belongs to the methyltransferase superfamily. RsmH family.

Its subcellular location is the cytoplasm. The enzyme catalyses cytidine(1402) in 16S rRNA + S-adenosyl-L-methionine = N(4)-methylcytidine(1402) in 16S rRNA + S-adenosyl-L-homocysteine + H(+). Its function is as follows. Specifically methylates the N4 position of cytidine in position 1402 (C1402) of 16S rRNA. This is Ribosomal RNA small subunit methyltransferase H from Syntrophotalea carbinolica (strain DSM 2380 / NBRC 103641 / GraBd1) (Pelobacter carbinolicus).